The primary structure comprises 308 residues: Aspartate carbamoyltransferase catalytic subunit (308 aa).

Positions 57 and 58 each coordinate carbamoyl phosphate. Lys86 provides a ligand contact to L-aspartate. Arg107, His135, and Gln138 together coordinate carbamoyl phosphate. The L-aspartate site is built by Arg168 and Arg229. Positions 268 and 269 each coordinate carbamoyl phosphate.

Belongs to the aspartate/ornithine carbamoyltransferase superfamily. ATCase family. In terms of assembly, heterooligomer of catalytic and regulatory chains.

It carries out the reaction carbamoyl phosphate + L-aspartate = N-carbamoyl-L-aspartate + phosphate + H(+). It participates in pyrimidine metabolism; UMP biosynthesis via de novo pathway; (S)-dihydroorotate from bicarbonate: step 2/3. Its function is as follows. Catalyzes the condensation of carbamoyl phosphate and aspartate to form carbamoyl aspartate and inorganic phosphate, the committed step in the de novo pyrimidine nucleotide biosynthesis pathway. This Pyrococcus furiosus (strain ATCC 43587 / DSM 3638 / JCM 8422 / Vc1) protein is Aspartate carbamoyltransferase catalytic subunit.